Consider the following 876-residue polypeptide: Alanine--tRNA ligase (876 aa).

Lys74 carries the post-translational modification N6-acetyllysine. Zn(2+)-binding residues include His564, His568, Cys666, and His670.

Belongs to the class-II aminoacyl-tRNA synthetase family. In terms of assembly, homotetramer. The cofactor is Zn(2+).

It is found in the cytoplasm. It carries out the reaction tRNA(Ala) + L-alanine + ATP = L-alanyl-tRNA(Ala) + AMP + diphosphate. Its function is as follows. Catalyzes the attachment of alanine to tRNA(Ala) in a two-step reaction: alanine is first activated by ATP to form Ala-AMP and then transferred to the acceptor end of tRNA(Ala). Also edits incorrectly charged Ser-tRNA(Ala) and Gly-tRNA(Ala) via its editing domain. The protein is Alanine--tRNA ligase of Escherichia coli (strain SMS-3-5 / SECEC).